The sequence spans 238 residues: Ribonuclease PH (238 aa).

Phosphate-binding positions include arginine 86 and 124 to 126; that span reads GTR.

The protein belongs to the RNase PH family. In terms of assembly, homohexameric ring arranged as a trimer of dimers.

The catalysed reaction is tRNA(n+1) + phosphate = tRNA(n) + a ribonucleoside 5'-diphosphate. Functionally, phosphorolytic 3'-5' exoribonuclease that plays an important role in tRNA 3'-end maturation. Removes nucleotide residues following the 3'-CCA terminus of tRNAs; can also add nucleotides to the ends of RNA molecules by using nucleoside diphosphates as substrates, but this may not be physiologically important. Probably plays a role in initiation of 16S rRNA degradation (leading to ribosome degradation) during starvation. This is Ribonuclease PH from Pectobacterium atrosepticum (strain SCRI 1043 / ATCC BAA-672) (Erwinia carotovora subsp. atroseptica).